We begin with the raw amino-acid sequence, 2586 residues long: Highly reducing polyketide synthase FUM1 (2586 aa).

Positions 29-451 constitute a Ketosynthase family 3 (KS3) domain; the sequence is VLPVAIVGMG…GANAHCIIET (423 aa). Catalysis depends on for beta-ketoacyl synthase activity residues C201, H336, and H374. Residues 609 to 928 are malonyl-CoA:ACP transacylase (MAT) domain; the sequence is IFTGQGAQWV…TESLLKLAGE (320 aa). Positions 980 to 1111 are N-terminal hotdog fold; the sequence is HELLGSRTLE…GQVRPGQDAH (132 aa). The dehydratase (DH) domain stretch occupies residues 980–1269; that stretch reads HELLGSRTLE…LEDGKFSPLE (290 aa). The PKS/mFAS DH domain maps to 980–1274; that stretch reads HELLGSRTLE…FSPLEMDLAE (295 aa). The active-site Proton acceptor; for dehydratase activity is the H1012. A C-terminal hotdog fold region spans residues 1125–1274; it reads QHYPRLVDNL…FSPLEMDLAE (150 aa). Residue D1186 is the Proton donor; for dehydratase activity of the active site. Residues 1450-1627 are methyltransferase (CMet) domain; sequence DFFATAGHTR…GFSGVDSAIY (178 aa). Residues 1862 to 2172 form an enoyl reductase (ER) (ER) domain region; sequence GLLQTLGWVP…KGVHLGKIVV (311 aa). A ketoreductase (KR) domain region spans residues 2197 to 2373; that stretch reads ASYLLVGGLG…ASVLQIGLIE (177 aa). In terms of domain architecture, Carrier spans 2486-2565; that stretch reads PATVELVTNE…GLARLTVDGL (80 aa). At S2524 the chain carries O-(pantetheine 4'-phosphoryl)serine.

It functions in the pathway mycotoxin biosynthesis. In terms of biological role, highly reducing polyketide synthase; part of the gene cluster that mediates the biosynthesis of fumonisins B1 (FB1), B2 (FB2), B3 (FB3), and B4 (FB4), which are carcinogenic mycotoxins. The biosynthesis starts with the FUM1-catalyzed carbon chain assembly from one molecule of acetyl-CoA, eight molecules of malonyl-CoA, and two molecules of methionine (in S-adenosyl form). The C18 polyketide chain is released from the enzyme by a nucleophilic attack of a carbanion, which is derived from R-carbon of alanine by decarboxylation, on the carbonyl carbon of polyketide acyl chain. This step is catalyzed by the pyridoxal 5'-phosphate-dependent aminoacyl transferase FUM8. The resultant 3-keto intermediate is then stereospecifically reduced to a 3-hydroxyl product by reductase FUM13. Subsequent oxidations at C-10 by the cytochrome P450 monooxygenase FUM2, C-14 and C-15 by FUM6, FUM12 or FUM15, tricarballylic esterification of the hydroxyl groups on C-14 and C-15 by acyltransferase FUM14, and C-5 hydroxylation by 2-keto-glutarate-dependent dioxygenase FUM3 furnish the biosynthesis of fumonisins. The tricarballylic moieties are most likely derived from the citric acid cycle, and their addition to the carbon backbone may involve FUM7, FUM10, FUM11 and FUM14. The sequence is that of Highly reducing polyketide synthase FUM1 from Gibberella moniliformis (strain M3125 / FGSC 7600) (Maize ear and stalk rot fungus).